A 230-amino-acid polypeptide reads, in one-letter code: Response regulator MprA (230 aa).

Positions 4–118 constitute a Response regulatory domain; it reads RILVVDDDRA…ELLARMRALL (115 aa). Asp48 carries the 4-aspartylphosphate modification. Residues 129–227 constitute a DNA-binding region (ompR/PhoB-type); it reads SPALTFLDLT…VRGVGYVLRE (99 aa).

Post-translationally, phosphorylated and dephosphorylated by MprB.

It localises to the cytoplasm. Its function is as follows. Member of the two-component regulatory system MprB/MprA which contributes to maintaining a balance among several systems involved in stress resistance and is required for establishment and maintenance of persistent infection in the host. Functions as a transcriptional regulator that recognizes a 19-bp nucleotide motif comprizing two loosely conserved 8-bp direct DNA-binding motif repeats separated by a 3-bp spacer region. The chain is Response regulator MprA (mprA) from Mycobacterium sp. (strain JLS).